The primary structure comprises 420 residues: MSAVGNEPLARQALAFVLAGGRGSRLLELTDRRAKPAVYFGGKSRIIDFALSNAVNSGIRRIAVATQYKAHSLIRHLQMGWNFFRPERNESFDILPASQRVSENMWYVGTADAIYQNIDIIESHNARFIVVLAGDHIYKMDYEVMLRQHVDSGADVTVGCLEMPRAESSGFGIMHIDENGWIQEFLEKPADPPPMPGKPDVSLASMGIYVFDAKFLFDQLKRDAEDPSSNHDFGKDIIPYIVKNGRAIAHQFSTSCVRSGDDPRAYWRDVGTVDAYWAANIDLTDVVPELDLFDRAWPIWSYSEITPPAKFVHDEESRRGQAVSSLVSGGCIISGASLRRSLLFTGVRINSYANVENAVIMPYVNVGRGARLKNVVIDRGVEIPEGLVIGEDPELDAKRFRTTEQGISLITQPMIDRLNT.

Alpha-D-glucose 1-phosphate contacts are provided by residues Tyr-107, Gly-172, 187 to 188 (EK), and Ser-205.

The protein belongs to the bacterial/plant glucose-1-phosphate adenylyltransferase family. Homotetramer.

It carries out the reaction alpha-D-glucose 1-phosphate + ATP + H(+) = ADP-alpha-D-glucose + diphosphate. The protein operates within glycan biosynthesis; glycogen biosynthesis. In terms of biological role, involved in the biosynthesis of ADP-glucose, a building block required for the elongation reactions to produce glycogen. Catalyzes the reaction between ATP and alpha-D-glucose 1-phosphate (G1P) to produce pyrophosphate and ADP-Glc. The polypeptide is Glucose-1-phosphate adenylyltransferase (Bradyrhizobium diazoefficiens (strain JCM 10833 / BCRC 13528 / IAM 13628 / NBRC 14792 / USDA 110)).